The following is a 503-amino-acid chain: Probable cytosol aminopeptidase (503 aa).

Residues Lys-274 and Asp-279 each contribute to the Mn(2+) site. Lys-286 is an active-site residue. Mn(2+)-binding residues include Asp-297, Asp-356, and Glu-358. Arg-360 is a catalytic residue.

The protein belongs to the peptidase M17 family. Mn(2+) is required as a cofactor.

It is found in the cytoplasm. It catalyses the reaction Release of an N-terminal amino acid, Xaa-|-Yaa-, in which Xaa is preferably Leu, but may be other amino acids including Pro although not Arg or Lys, and Yaa may be Pro. Amino acid amides and methyl esters are also readily hydrolyzed, but rates on arylamides are exceedingly low.. The enzyme catalyses Release of an N-terminal amino acid, preferentially leucine, but not glutamic or aspartic acids.. Its function is as follows. Presumably involved in the processing and regular turnover of intracellular proteins. Catalyzes the removal of unsubstituted N-terminal amino acids from various peptides. The protein is Probable cytosol aminopeptidase of Burkholderia ambifaria (strain ATCC BAA-244 / DSM 16087 / CCUG 44356 / LMG 19182 / AMMD) (Burkholderia cepacia (strain AMMD)).